Consider the following 171-residue polypeptide: 3-hydroxydecanoyl-[acyl-carrier-protein] dehydratase (171 aa).

The active site involves His70.

It belongs to the thioester dehydratase family. FabA subfamily. As to quaternary structure, homodimer.

It localises to the cytoplasm. It carries out the reaction a (3R)-hydroxyacyl-[ACP] = a (2E)-enoyl-[ACP] + H2O. The catalysed reaction is (3R)-hydroxydecanoyl-[ACP] = (2E)-decenoyl-[ACP] + H2O. It catalyses the reaction (2E)-decenoyl-[ACP] = (3Z)-decenoyl-[ACP]. The protein operates within lipid metabolism; fatty acid biosynthesis. Functionally, necessary for the introduction of cis unsaturation into fatty acids. Catalyzes the dehydration of (3R)-3-hydroxydecanoyl-ACP to E-(2)-decenoyl-ACP and then its isomerization to Z-(3)-decenoyl-ACP. Can catalyze the dehydratase reaction for beta-hydroxyacyl-ACPs with saturated chain lengths up to 16:0, being most active on intermediate chain length. The sequence is that of 3-hydroxydecanoyl-[acyl-carrier-protein] dehydratase from Ectopseudomonas mendocina (strain ymp) (Pseudomonas mendocina).